The sequence spans 142 residues: D-aminoacyl-tRNA deacylase (142 aa).

The Gly-cisPro motif, important for rejection of L-amino acids signature appears at 133 to 134 (GP).

The protein belongs to the DTD family. As to quaternary structure, homodimer.

The protein localises to the cytoplasm. The enzyme catalyses glycyl-tRNA(Ala) + H2O = tRNA(Ala) + glycine + H(+). The catalysed reaction is a D-aminoacyl-tRNA + H2O = a tRNA + a D-alpha-amino acid + H(+). In terms of biological role, an aminoacyl-tRNA editing enzyme that deacylates mischarged D-aminoacyl-tRNAs. Also deacylates mischarged glycyl-tRNA(Ala), protecting cells against glycine mischarging by AlaRS. Acts via tRNA-based rather than protein-based catalysis; rejects L-amino acids rather than detecting D-amino acids in the active site. By recycling D-aminoacyl-tRNA to D-amino acids and free tRNA molecules, this enzyme counteracts the toxicity associated with the formation of D-aminoacyl-tRNA entities in vivo and helps enforce protein L-homochirality. The protein is D-aminoacyl-tRNA deacylase of Acidothermus cellulolyticus (strain ATCC 43068 / DSM 8971 / 11B).